A 156-amino-acid chain; its full sequence is Ribonuclease H (156 aa).

In terms of domain architecture, RNase H type-1 spans 1-142; that stretch reads MNKQVEIFTD…CDELARQAAE (142 aa). D10, E48, D70, and D134 together coordinate Mg(2+). Residues 135-156 form a disordered region; sequence ELARQAAENPTEDDIGYQPEPQ.

The protein belongs to the RNase H family. As to quaternary structure, monomer. Mg(2+) is required as a cofactor.

The protein localises to the cytoplasm. It carries out the reaction Endonucleolytic cleavage to 5'-phosphomonoester.. Endonuclease that specifically degrades the RNA of RNA-DNA hybrids. This chain is Ribonuclease H, found in Vibrio cholerae serotype O1 (strain M66-2).